Consider the following 491-residue polypeptide: MSLIEGLLQTSSTVTLLGTVLFLLVLYLRSSGSSSEGQGKEPPGPRPLPLLGNMLQLDLKKPYCTLCELSKKYGSIFTFHFGPKKVVVLAGYKTVKQALVNQAEDFGDRDITPVFYDFNQGHGILFANGDSWKEMRRFALTNLRDFGMGKKGSEEKILEEIPYLIEVFEKHEGKAFDTTQSVLYAVSNIISAIVYGSRFEYTDPLFTGMADRAKESIHLTGSASIQMYNMFPWLGPWINNLTRLKKNIADMKMEVTELVRGLKETLNPHMCRGFVDSFLVRKQTLEESGHMDSFYHDDNLVFSVGNLFSAGTDTTGTTLRWGLLLMTKYPHIQDQVQEEISGVIGSRQTLVEDRKNLPYTDAVIHETQRLANIAPMSIPHTTSRDVTFQGYFIKKDDSEWESPHTLTPSHFLDEKGGFVKRDAFMAFSAGRRVCLGEGLARMELFLFFTSLLQHFRFSPPPGVTEDDLDLTPSVEFTHNPSPHQLCAVSRV.

A heme-binding site is contributed by cysteine 434.

Belongs to the cytochrome P450 family. Heme is required as a cofactor.

The protein localises to the endoplasmic reticulum membrane. The protein resides in the microsome membrane. The enzyme catalyses an organic molecule + reduced [NADPH--hemoprotein reductase] + O2 = an alcohol + oxidized [NADPH--hemoprotein reductase] + H2O + H(+). This is Cytochrome P450 2K3 (cyp2k3) from Oncorhynchus mykiss (Rainbow trout).